Consider the following 622-residue polypeptide: MKTLLIHSDYLEFTAKEKTKIAEDAEILNGKMDECLTVFIAVEKEDESDPVAVIKNAVFEIIKTAGNLNVKNIVVYPYAHLSSDLGSPETAKEILKGIEKELSSSFEVLRAPFGWYKSFKISCKGHPLSELSRKIGTERIEKEKKEKVVSKFYIINGENSELTEVNDELLSKLKDKGLLALLKHELDIKEEGKENGEPPHVKYIKEKEICDYEPSSDAGHFRWYPKGKLIRDLLSDYVYNLVVENGGMPVETPVMYDLQNNAIREHADKFGERQYRFRQGNKDLMLRFAACFGQFMMKKDMYLLPKHLPLKLYELSTYSFRYEQRGELVGLKRLRGFTMPDMHTVCIDMNQAMEAFENQFWMGLKTGDDFKTPYSIIFRFTNEFFEENKEWFFKMAKEYKLKYGKDAILEILPGRKHYWVGKVDMAVVDSFGRPIENPTVQIDVESAQRFGITVHDGDKTIHPIILHCSPTGSIERVLCGLLENAYIKTLEDKPPALPTWLTPIQARVIPVSERNEEFALEVVNKLRESGIRTDFDDREDSMGKKIRNAGTDWVNYVVVIGDNEMESKKLTVTLREESSIKQPKKESLTVGELIEKVTSEIKGSPNRPLPLPMKCSVQPIFR.

An editing domain region spans residues 1 to 134; that stretch reads MKTLLIHSDY…GHPLSELSRK (134 aa). Residues 199-498 form a catalytic region; the sequence is PHVKYIKEKE…TLEDKPPALP (300 aa). Zn(2+) contacts are provided by cysteine 291, histidine 343, and histidine 467.

This sequence belongs to the class-II aminoacyl-tRNA synthetase family. Homodimer. It depends on Zn(2+) as a cofactor.

Its subcellular location is the cytoplasm. It catalyses the reaction tRNA(Thr) + L-threonine + ATP = L-threonyl-tRNA(Thr) + AMP + diphosphate + H(+). Functionally, catalyzes the attachment of threonine to tRNA(Thr) in a two-step reaction: L-threonine is first activated by ATP to form Thr-AMP and then transferred to the acceptor end of tRNA(Thr). Also edits incorrectly charged L-seryl-tRNA(Thr). The chain is Threonine--tRNA ligase from Methanococcus vannielii (strain ATCC 35089 / DSM 1224 / JCM 13029 / OCM 148 / SB).